We begin with the raw amino-acid sequence, 453 residues long: tRNA modification GTPase MnmE (453 aa).

Residues Arg22, Glu79, and Lys119 each contribute to the (6S)-5-formyl-5,6,7,8-tetrahydrofolate site. The 162-residue stretch at 215 to 376 (GMKVVIAGRP…LKQHLKSLMG (162 aa)) folds into the TrmE-type G domain. Asn225 is a K(+) binding site. GTP is bound by residues 225–230 (NAGKSS), 244–250 (TEIAGTT), 269–272 (DTAG), and 334–337 (NKAD). A Mg(2+)-binding site is contributed by Ser229. Residues Thr244, Ile246, and Thr249 each contribute to the K(+) site. Thr250 is a binding site for Mg(2+). Lys453 provides a ligand contact to (6S)-5-formyl-5,6,7,8-tetrahydrofolate.

Belongs to the TRAFAC class TrmE-Era-EngA-EngB-Septin-like GTPase superfamily. TrmE GTPase family. Homodimer. Heterotetramer of two MnmE and two MnmG subunits. It depends on K(+) as a cofactor.

The protein resides in the cytoplasm. In terms of biological role, exhibits a very high intrinsic GTPase hydrolysis rate. Involved in the addition of a carboxymethylaminomethyl (cmnm) group at the wobble position (U34) of certain tRNAs, forming tRNA-cmnm(5)s(2)U34. The chain is tRNA modification GTPase MnmE from Shewanella halifaxensis (strain HAW-EB4).